The sequence spans 308 residues: Tyrosine recombinase XerD (308 aa).

A Core-binding (CB) domain is found at 13-97 (PSSTEAIQRF…VFKRFFQWAL (85 aa)). Positions 118-302 (RVPKTLSEAQ…ARERLRTLHA (185 aa)) constitute a Tyr recombinase domain. Active-site residues include Arg158, Lys183, His254, Arg257, and His280. Residue Tyr289 is the O-(3'-phospho-DNA)-tyrosine intermediate of the active site.

It belongs to the 'phage' integrase family. XerD subfamily. In terms of assembly, forms a cyclic heterotetrameric complex composed of two molecules of XerC and two molecules of XerD.

It localises to the cytoplasm. Site-specific tyrosine recombinase, which acts by catalyzing the cutting and rejoining of the recombining DNA molecules. The XerC-XerD complex is essential to convert dimers of the bacterial chromosome into monomers to permit their segregation at cell division. It also contributes to the segregational stability of plasmids. This is Tyrosine recombinase XerD from Ralstonia nicotianae (strain ATCC BAA-1114 / GMI1000) (Ralstonia solanacearum).